Here is a 509-residue protein sequence, read N- to C-terminus: Dihydrolipoyl dehydrogenase, mitochondrial (509 aa).

Residues 1 to 35 (MQSWSRVYCSLAKRGHFNRISHGLQGVSSVPLRTY) constitute a mitochondrion transit peptide. An N6-acetyllysine; alternate modification is found at Lys66. N6-succinyllysine; alternate is present on Lys66. FAD is bound by residues 71 to 80 (EKNDTLGGTC) and Lys89. A disulfide bond links Cys80 and Cys85. Lys122, Lys132, and Lys143 each carry N6-acetyllysine; alternate. 3 positions are modified to N6-succinyllysine; alternate: Lys122, Lys132, and Lys143. FAD is bound at residue Gly154. N6-succinyllysine occurs at positions 159 and 166. Residue 183–185 (TGS) participates in FAD binding. NAD(+) contacts are provided by residues 220 to 227 (GAGVIGVE) and Glu243. N6-succinyllysine occurs at positions 273 and 277. Val278 lines the NAD(+) pocket. Phosphoserine is present on residues Ser285 and Ser297. Gly314 provides a ligand contact to NAD(+). An N6-acetyllysine modification is found at Lys346. FAD is bound by residues Asp355 and 361-364 (MLAH). An N6-acetyllysine; alternate modification is found at Lys410. Lys410 carries the post-translational modification N6-succinyllysine; alternate. 2 positions are modified to N6-acetyllysine: Lys417 and Lys420. Lys430 carries the N6-succinyllysine modification. His487 serves as the catalytic Proton acceptor. At Ser502 the chain carries Phosphoserine. Lys505 bears the N6-acetyllysine; alternate mark. Lys505 carries the post-translational modification N6-succinyllysine; alternate.

The protein belongs to the class-I pyridine nucleotide-disulfide oxidoreductase family. Homodimer. Part of the multimeric pyruvate dehydrogenase complex that contains multiple copies of pyruvate dehydrogenase (subunits PDHA (PDHA1 or PDHA2) and PDHB, E1), dihydrolipoamide acetyltransferase (DLAT, E2) and lipoamide dehydrogenase (DLD, E3). These subunits are bound to an inner core composed of about 48 DLAT and 12 PDHX molecules (by non covalent bonds). The 2-oxoglutarate dehydrogenase complex is composed of OGDH (2-oxoglutarate dehydrogenase; E1), DLST (dihydrolipoamide succinyltransferase; E2), DLD (dihydrolipoamide dehydrogenase; E3) and the assembly factor KGD4. It contains multiple copies of the three enzymatic components (E1, E2 and E3). In the nucleus, the 2-oxoglutarate dehydrogenase complex associates with KAT2A. Interacts with PDHX. Requires FAD as cofactor. Post-translationally, tyrosine phosphorylated.

It is found in the mitochondrion matrix. The protein localises to the nucleus. Its subcellular location is the cell projection. It localises to the cilium. The protein resides in the flagellum. It is found in the cytoplasmic vesicle. The protein localises to the secretory vesicle. Its subcellular location is the acrosome. The enzyme catalyses N(6)-[(R)-dihydrolipoyl]-L-lysyl-[protein] + NAD(+) = N(6)-[(R)-lipoyl]-L-lysyl-[protein] + NADH + H(+). In terms of biological role, lipoamide dehydrogenase is a component of the glycine cleavage system as well as an E3 component of three alpha-ketoacid dehydrogenase complexes (pyruvate-, alpha-ketoglutarate-, and branched-chain amino acid-dehydrogenase complex). The 2-oxoglutarate dehydrogenase complex is mainly active in the mitochondrion. A fraction of the 2-oxoglutarate dehydrogenase complex also localizes in the nucleus and is required for lysine succinylation of histones: associates with KAT2A on chromatin and provides succinyl-CoA to histone succinyltransferase KAT2A. In monomeric form may have additional moonlighting function as serine protease. Involved in the hyperactivation of spermatazoa during capacitation and in the spermatazoal acrosome reaction. The chain is Dihydrolipoyl dehydrogenase, mitochondrial (DLD) from Cricetulus griseus (Chinese hamster).